A 100-amino-acid polypeptide reads, in one-letter code: RING finger protein Z (100 aa).

Gly-2 is lipidated: N-myristoyl glycine; by host. Residues 43-79 (CRCCWFANTNLIKCSDHYICLKCLNIMLGKSSFCDIC) form an RING-type; atypical zinc finger. A PTAP/PSAP motif motif is present at residues 93 to 96 (PSAP).

This sequence belongs to the arenaviridae Z protein family. As to quaternary structure, interacts with protein NP; this interaction probably directs the encapsidated genome to budding sites. Interacts (via RING domain) with polymerase L; this interaction inhibits viral transcription and replication, Z partially blocks the product exit tunnel for the releasing nascent RNA product. Interacts with the glycoprotein complex; this interaction plays a role in virion budding. Interacts with host eIF4E; this interaction results in eIF4E reduced affinity for its substrate, the 5'-m7 G cap structure. Interacts (via late-budding domain) with host TSG101; this interaction is essential for budding and release of viral particles. Interacts with host RPLP0; this interaction may serve to load ribosome-like particles inside the virion. Interacts with host PML; this interaction induces PML bodies redistribution in the cytoplasm upon viral infection. In terms of processing, myristoylation is required for the role of RING finger protein Z in assembly and budding.

Its subcellular location is the virion. The protein localises to the host cytoplasm. The protein resides in the host perinuclear region. It localises to the host cell membrane. Functionally, plays a crucial role in virion assembly and budding. Expressed late in the virus life cycle, it acts as an inhibitor of viral transcription and RNA synthesis by interacting with the viral polymerase L. Presumably recruits the NP encapsidated genome to cellular membranes at budding sites via direct interaction with NP. Plays critical roles in the final steps of viral release by interacting with host TSG101, a member of the vacuolar protein-sorting pathway and using other cellular host proteins involved in vesicle formation pathway. The budding of the virus progeny occurs after association of protein Z with the viral glycoprotein complex SSP-GP1-GP2 at the cell periphery, step that requires myristoylation of protein Z. Also selectively represses protein production by associating with host eIF4E. In cell-based minigenome assay, has an inhibitory effect on the ribonucleoprotein machinery (vRNP), which is responsible for the replication and transcription of the viral genome. This Homo sapiens (Human) protein is RING finger protein Z.